We begin with the raw amino-acid sequence, 269 residues long: Eukaryotic translation initiation factor 3 subunit G (269 aa).

A disordered region spans residues 140–181; the sequence is AIGGGDMSAQGGSGSGRYVPPSLRAGARDPSSNAYQDQRERD. Residues 141-154 are compositionally biased toward gly residues; it reads IGGGDMSAQGGSGS. S161 carries the post-translational modification Phosphoserine. Residues 184–263 form the RRM domain; sequence KTIRLTQVNE…FMLHAEWSKP (80 aa).

The protein belongs to the eIF-3 subunit G family. In terms of assembly, component of the eukaryotic translation initiation factor 3 (eIF-3) complex.

The protein resides in the cytoplasm. RNA-binding component of the eukaryotic translation initiation factor 3 (eIF-3) complex, which is involved in protein synthesis of a specialized repertoire of mRNAs and, together with other initiation factors, stimulates binding of mRNA and methionyl-tRNAi to the 40S ribosome. The eIF-3 complex specifically targets and initiates translation of a subset of mRNAs involved in cell proliferation. This subunit can bind 18S rRNA. The sequence is that of Eukaryotic translation initiation factor 3 subunit G from Kluyveromyces lactis (strain ATCC 8585 / CBS 2359 / DSM 70799 / NBRC 1267 / NRRL Y-1140 / WM37) (Yeast).